A 427-amino-acid polypeptide reads, in one-letter code: Putative ABC transporter substrate-binding protein YesO (427 aa).

It belongs to the bacterial solute-binding protein 1 family.

May play a role in the degradation of type I rhamnogalacturonan derived from plant cell walls. In Bacillus subtilis (strain 168), this protein is Putative ABC transporter substrate-binding protein YesO (yesO).